Reading from the N-terminus, the 233-residue chain is Large ribosomal subunit protein uL1 (233 aa).

This sequence belongs to the universal ribosomal protein uL1 family. Part of the 50S ribosomal subunit.

Its function is as follows. Binds directly to 23S rRNA. The L1 stalk is quite mobile in the ribosome, and is involved in E site tRNA release. In terms of biological role, protein L1 is also a translational repressor protein, it controls the translation of the L11 operon by binding to its mRNA. This Geobacillus thermodenitrificans (strain NG80-2) protein is Large ribosomal subunit protein uL1.